A 131-amino-acid polypeptide reads, in one-letter code: Large ribosomal subunit protein bL17 (131 aa).

Belongs to the bacterial ribosomal protein bL17 family. In terms of assembly, part of the 50S ribosomal subunit. Contacts protein L32.

The protein is Large ribosomal subunit protein bL17 of Burkholderia mallei (strain NCTC 10229).